A 301-amino-acid chain; its full sequence is Mitochondrial carnitine/acylcarnitine carrier protein (301 aa).

Residue A2 is modified to N-acetylalanine. Over 2 to 12 the chain is Cytoplasmic; the sequence is ADEPKPISPFK. Solcar repeat units follow at residues 8 to 99, 108 to 196, and 207 to 293; these read ISPF…GKKL, LSYP…LKNL, and LSVP…AMKF. The helical transmembrane segment at 13 to 31 threads the bilayer; it reads NLLAGGFGGMCLVFVGHPL. The Mitochondrial matrix portion of the chain corresponds to 32–73; that stretch reads DTVKVRLQTQPPSLSGQPPMYSGTLDCFRKTLMREGITGLYR. Residues 74-93 traverse the membrane as a helical segment; sequence GMAAPIIGVTPMFAVCFFGF. Topologically, residues 94–112 are cytoplasmic; that stretch reads GLGKKLQQKSPEDELSYPQ. A helical transmembrane segment spans residues 113–131; sequence LFTAGMLSGVFTTGIMTPG. The Mitochondrial matrix portion of the chain corresponds to 132–170; sequence ERIKCLLQIQASSGENKYSGTLDCAKKLYQEFGIRGFYK. 2 positions are modified to N6-acetyllysine: K148 and K157. An N6-acetyllysine; alternate modification is found at K170. K170 is subject to N6-succinyllysine; alternate. The chain crosses the membrane as a helical span at residues 171–190; that stretch reads GTVLTLMRDVPASGMYFMTY. At 191 to 211 the chain is on the cytoplasmic side; it reads EWLKNLFTPEGKSVSDLSVPR. Residues 212–230 traverse the membrane as a helical segment; it reads ILVAGGFAGIFNWAVAIPP. Residues 231 to 267 lie on the Mitochondrial matrix side of the membrane; it reads DVLKSRFQTAPPGKYPNGFRDVLRELIREEGVTSLYK. A helical transmembrane segment spans residues 268 to 287; it reads GFNAVMIRAFPANAACFLGF. Over 288–301 the chain is Cytoplasmic; the sequence is EIAMKFLNWIAPNL.

Belongs to the mitochondrial carrier (TC 2.A.29) family. As to expression, widely expressed, with highest levels in the liver, intermediate levels in heart, testis and kidney and low levels in brain, including cortex, cerebellum, hippocampus and hypothalamus.

The protein localises to the mitochondrion inner membrane. The enzyme catalyses O-acetyl-(R)-carnitine(in) + (R)-carnitine(out) = O-acetyl-(R)-carnitine(out) + (R)-carnitine(in). It catalyses the reaction an O-acyl-(R)-carnitine(in) + (R)-carnitine(out) = an O-acyl-(R)-carnitine(out) + (R)-carnitine(in). It carries out the reaction O-propanoyl-(R)-carnitine(in) + (R)-carnitine(out) = O-propanoyl-(R)-carnitine(out) + (R)-carnitine(in). The catalysed reaction is O-hexadecanoyl-(R)-carnitine(in) + (R)-carnitine(out) = O-hexadecanoyl-(R)-carnitine(out) + (R)-carnitine(in). The enzyme catalyses O-octanoyl-(R)-carnitine(in) + (R)-carnitine(out) = O-octanoyl-(R)-carnitine(out) + (R)-carnitine(in). It catalyses the reaction (R)-carnitine(in) = (R)-carnitine(out). In terms of biological role, mediates the electroneutral exchange of acylcarnitines (O-acyl-(R)-carnitine or L-acylcarnitine) of different acyl chain lengths (ranging from O-acetyl-(R)-carnitine to long-chain O-acyl-(R)-carnitines) with free carnitine ((R)-carnitine or L-carnitine) across the mitochondrial inner membrane, via a ping-pong mechanism. Key player in the mitochondrial oxidation pathway, it translocates the fatty acids in the form of acylcarnitines into the mitochondrial matrix, where the carnitine palmitoyltransferase 2 (CPT-2) activates them to undergo fatty acid beta-oxidation. Catalyzes the unidirectional transport (uniport) of carnitine at lower rates than the antiport (exchange). The chain is Mitochondrial carnitine/acylcarnitine carrier protein from Mus musculus (Mouse).